Consider the following 618-residue polypeptide: UvrABC system protein C (618 aa).

The GIY-YIG domain maps to 19–97; it reads SEPGIYRMLD…IKALRPKYNV (79 aa). One can recognise a UVR domain in the interval 208–243; that stretch reads QIILDALAERMKQAVNQLNFEEAAVLRDQIKNLRLI.

The protein belongs to the UvrC family. Interacts with UvrB in an incision complex.

It is found in the cytoplasm. Its function is as follows. The UvrABC repair system catalyzes the recognition and processing of DNA lesions. UvrC both incises the 5' and 3' sides of the lesion. The N-terminal half is responsible for the 3' incision and the C-terminal half is responsible for the 5' incision. This chain is UvrABC system protein C, found in Legionella pneumophila (strain Paris).